The sequence spans 90 residues: DNA-binding protein HU-alpha (90 aa).

The protein belongs to the bacterial histone-like protein family. In terms of assembly, heterodimer of an alpha and a beta chain.

Functionally, histone-like DNA-binding protein which is capable of wrapping DNA to stabilize it, and thus to prevent its denaturation under extreme environmental conditions. In Serratia marcescens, this protein is DNA-binding protein HU-alpha (hupA).